The following is a 263-amino-acid chain: tRNA pseudouridine synthase A (263 aa).

The active-site Nucleophile is Asp-51. Substrate is bound at residue Tyr-109.

This sequence belongs to the tRNA pseudouridine synthase TruA family. In terms of assembly, homodimer.

The enzyme catalyses uridine(38/39/40) in tRNA = pseudouridine(38/39/40) in tRNA. In terms of biological role, formation of pseudouridine at positions 38, 39 and 40 in the anticodon stem and loop of transfer RNAs. The protein is tRNA pseudouridine synthase A of Mannheimia succiniciproducens (strain KCTC 0769BP / MBEL55E).